A 237-amino-acid polypeptide reads, in one-letter code: ATP synthase subunit a (237 aa).

5 helical membrane-spanning segments follow: residues L18–A38, S77–A97, N114–I134, L167–T187, and A208–G230.

This sequence belongs to the ATPase A chain family. As to quaternary structure, F-type ATPases have 2 components, CF(1) - the catalytic core - and CF(0) - the membrane proton channel. CF(1) has five subunits: alpha(3), beta(3), gamma(1), delta(1), epsilon(1). CF(0) has three main subunits: a(1), b(2) and c(9-12). The alpha and beta chains form an alternating ring which encloses part of the gamma chain. CF(1) is attached to CF(0) by a central stalk formed by the gamma and epsilon chains, while a peripheral stalk is formed by the delta and b chains.

It is found in the cell membrane. Functionally, key component of the proton channel; it plays a direct role in the translocation of protons across the membrane. This is ATP synthase subunit a from Streptococcus gordonii (strain Challis / ATCC 35105 / BCRC 15272 / CH1 / DL1 / V288).